The sequence spans 201 residues: Protein TraJ (201 aa).

It localises to the cytoplasm. Functionally, this protein is essential for positively regulating the expression of transfer genes that are involved in the conjugal transfer of DNA between bacterial cells. The chain is Protein TraJ (traJ) from Escherichia coli.